Reading from the N-terminus, the 436-residue chain is GDP-mannose 6-dehydrogenase (436 aa).

6 residues coordinate NAD(+): Tyr10, Val11, Asp30, Lys35, Thr86, and Thr124. Residues Glu161, Lys210, Asn214, His217, Asn225, Tyr256, Tyr257, Arg259, and Gly265 each contribute to the GDP-alpha-D-mannuronate site. The active site involves Cys268. Position 271 (Lys271) interacts with NAD(+). Lys324 is a binding site for GDP-alpha-D-mannuronate. Arg331 contacts NAD(+).

This sequence belongs to the UDP-glucose/GDP-mannose dehydrogenase family.

It carries out the reaction GDP-alpha-D-mannose + 2 NAD(+) + H2O = GDP-alpha-D-mannuronate + 2 NADH + 3 H(+). The protein operates within glycan biosynthesis; alginate biosynthesis. Catalyzes the oxidation of guanosine diphospho-D-mannose (GDP-D-mannose) to GDP-D-mannuronic acid, a precursor for alginate polymerization. The alginate layer causes a mucoid phenotype and is essential for cyst formation. In Azotobacter vinelandii, this protein is GDP-mannose 6-dehydrogenase (algD).